The following is a 306-amino-acid chain: Porphobilinogen deaminase (306 aa).

The residue at position 239 (C239) is an S-(dipyrrolylmethanemethyl)cysteine.

Belongs to the HMBS family. As to quaternary structure, monomer. Dipyrromethane is required as a cofactor.

It carries out the reaction 4 porphobilinogen + H2O = hydroxymethylbilane + 4 NH4(+). It functions in the pathway porphyrin-containing compound metabolism; protoporphyrin-IX biosynthesis; coproporphyrinogen-III from 5-aminolevulinate: step 2/4. Tetrapolymerization of the monopyrrole PBG into the hydroxymethylbilane pre-uroporphyrinogen in several discrete steps. The protein is Porphobilinogen deaminase (hemC) of Helicobacter pylori (strain ATCC 700392 / 26695) (Campylobacter pylori).